The chain runs to 297 residues: Homoserine kinase (297 aa).

ATP is bound at residue 82-92 (PVSRGLGSSAA).

This sequence belongs to the GHMP kinase family. Homoserine kinase subfamily.

The protein localises to the cytoplasm. It carries out the reaction L-homoserine + ATP = O-phospho-L-homoserine + ADP + H(+). It functions in the pathway amino-acid biosynthesis; L-threonine biosynthesis; L-threonine from L-aspartate: step 4/5. Catalyzes the ATP-dependent phosphorylation of L-homoserine to L-homoserine phosphate. This chain is Homoserine kinase, found in Clostridium botulinum (strain 657 / Type Ba4).